Reading from the N-terminus, the 888-residue chain is Phosphoenolpyruvate carboxylase (888 aa).

Residues H144 and K553 contribute to the active site.

It belongs to the PEPCase type 1 family. Mg(2+) serves as cofactor.

It carries out the reaction oxaloacetate + phosphate = phosphoenolpyruvate + hydrogencarbonate. Its function is as follows. Forms oxaloacetate, a four-carbon dicarboxylic acid source for the tricarboxylic acid cycle. The protein is Phosphoenolpyruvate carboxylase of Alcanivorax borkumensis (strain ATCC 700651 / DSM 11573 / NCIMB 13689 / SK2).